A 492-amino-acid polypeptide reads, in one-letter code: UDP-N-acetylmuramoyl-L-alanyl-D-glutamate--2,6-diaminopimelate ligase (492 aa).

Residue S21 participates in UDP-N-acetyl-alpha-D-muramoyl-L-alanyl-D-glutamate binding. An ATP-binding site is contributed by 98 to 104 (GTNGKSS). Residues 144-145 (TT), S171, Q177, and R179 each bind UDP-N-acetyl-alpha-D-muramoyl-L-alanyl-D-glutamate. Position 211 is an N6-carboxylysine (K211). Meso-2,6-diaminopimelate-binding positions include R372, 396–399 (DNPR), G446, and E450. The Meso-diaminopimelate recognition motif motif lies at 396–399 (DNPR).

Belongs to the MurCDEF family. MurE subfamily. Requires Mg(2+) as cofactor. Post-translationally, carboxylation is probably crucial for Mg(2+) binding and, consequently, for the gamma-phosphate positioning of ATP.

It localises to the cytoplasm. The enzyme catalyses UDP-N-acetyl-alpha-D-muramoyl-L-alanyl-D-glutamate + meso-2,6-diaminopimelate + ATP = UDP-N-acetyl-alpha-D-muramoyl-L-alanyl-gamma-D-glutamyl-meso-2,6-diaminopimelate + ADP + phosphate + H(+). Its pathway is cell wall biogenesis; peptidoglycan biosynthesis. In terms of biological role, catalyzes the addition of meso-diaminopimelic acid to the nucleotide precursor UDP-N-acetylmuramoyl-L-alanyl-D-glutamate (UMAG) in the biosynthesis of bacterial cell-wall peptidoglycan. The polypeptide is UDP-N-acetylmuramoyl-L-alanyl-D-glutamate--2,6-diaminopimelate ligase (Rickettsia typhi (strain ATCC VR-144 / Wilmington)).